Consider the following 295-residue polypeptide: ATP synthase gamma chain (295 aa).

The protein belongs to the ATPase gamma chain family. As to quaternary structure, F-type ATPases have 2 components, CF(1) - the catalytic core - and CF(0) - the membrane proton channel. CF(1) has five subunits: alpha(3), beta(3), gamma(1), delta(1), epsilon(1). CF(0) has three main subunits: a, b and c.

The protein resides in the cell inner membrane. In terms of biological role, produces ATP from ADP in the presence of a proton gradient across the membrane. The gamma chain is believed to be important in regulating ATPase activity and the flow of protons through the CF(0) complex. This Sulfurovum sp. (strain NBC37-1) protein is ATP synthase gamma chain.